The sequence spans 2737 residues: Non-reducing polyketide synthase ATEG_07661 (2737 aa).

The tract at residues 75–245 (SRSLAELDSW…VRYDQTRATV (171 aa)) is N-terminal acylcarrier protein transacylase domain (SAT). Residue C154 is the Nucleophile; for transacylase activity of the active site. The active-site Proton donor/acceptor; for transacylase activity is H276. Residues 427–854 (NEAIAIVGMS…GSNASMIITE (428 aa)) enclose the Ketosynthase family 3 (KS3) domain. Catalysis depends on for beta-ketoacyl synthase activity residues C603, H738, and H777. The malonyl-CoA:ACP transacylase (MAT) stretch occupies residues 969 to 1260 (FGGQVSRFVG…IMASRAIAQS (292 aa)). The tract at residues 1368-1503 (LQSLWNFVEF…ASVEMRAPTD (136 aa)) is N-terminal hotdog fold. Residues 1368-1683 (LQSLWNFVEF…YGRVAKASMS (316 aa)) enclose the PKS/mFAS DH domain. The tract at residues 1399–1681 (FVLSHVIAQT…VQYGRVAKAS (283 aa)) is product template (PT) domain. Catalysis depends on H1403, which acts as the Proton acceptor; for dehydratase activity. Residues 1535–1683 (VEVLQGRNVY…YGRVAKASMS (149 aa)) are C-terminal hotdog fold. The active-site Proton donor; for dehydratase activity is D1592. Residues 1724–1747 (SRTTKKKAKASKSKSSVKKDKAPS) form a disordered region. Over residues 1725-1739 (RTTKKKAKASKSKSS) the composition is skewed to basic residues. In terms of domain architecture, Carrier spans 1750 to 1824 (RDITDEVRNL…KFVACVSNAL (75 aa)). S1784 bears the O-(pantetheine 4'-phosphoryl)serine mark. The tract at residues 1827-1876 (PNQGQSSIDEDDEDDEHSEDSSNESSSAASDEDASSGLESPDTGILTPED) is disordered. Residues 1834–1848 (IDEDDEDDEHSEDSS) are compositionally biased toward acidic residues. Positions 1849-1866 (NESSSAASDEDASSGLES) are enriched in low complexity. The methyltransferase domain stretch occupies residues 2094–2270 (ADRIQSSSGS…GFGHVDWTDG (177 aa)). The segment at 2362–2665 (VVLVTGATGS…IPFKDWISRV (304 aa)) is NADPH-binding domain.

Its pathway is secondary metabolite biosynthesis. Functionally, non-reducing polyketide synthase; part of the cluster B that mediates the biosynthesis of azasperpyranones, members of the azaphilone family that exhibit anti-cancer activities. Azasperpyranones are synthesized by 2 clusters, A and B. Cluster A is responsible for the production of the polyhydric phenol moiety while the azaphilonoid scaffold is produced by the cluster B. The non-reducing polyketide synthase ATEG_03629 produces 5-methyl orsellinic acid, which is then reduced to 5-methyl orsellinic aldehyde by the NRPS-like protein ATEG_03630. 5-methyl orsellinic aldehyde is then first hydroxylated by the FAD-dependent monooxygenase ATEG_03635 and subsequently hydroxylated by the cytochrome P450 monooxygenase ATEG_03631 to produce the unstable polyhydric phenol precursor of azasperpyranones. On the other hand, the polyketide synthase ATEG_07659 is responsible for producing the 3,5-dimethyloctadienone moiety from acetyl-CoA, three malonyl-CoA, and two S-adenosyl methionines (SAM). The 3,5-dimethyloctadienone moiety is then loaded onto the SAT domain of ATEG_07661 and extended with four malonyl-CoA and one SAM, which leads to the formation of 2,4-dihydroxy-6-(5,7-dimethyl-2-oxo-trans-3-trans-5-nonadienyl)-3-methylbenzaldehyde (compound 8) after reductive release and aldol condensation. The FAD-dependent monooxygenase ATEG_07662 is the next enzyme in the biosynthesis sequence and hydroxylates the side chain at the benzylic position of compound 8. In Aspergillus nidulans, afoF, the ortholog of the FAD-dependent oxygenase ATEG_07660, is the key enzyme for the biosynthesis of asperfuranone by catalyzing the hydroxylation at C-8 of to prevent the formation of a six-membered ring hemiacetal intermediate and thus facilitating the formation of a five-membered ring to produce asperfuranone. In Aspergillus terreus, ATEG_07660 is probably not functional, which leads to the formation of the six-membered ring hemiacetal intermediate presperpyranone instead of asperfuranone. Finally, ATEG_03636 is involved in the condensation of the polyhydric phenol moiety produced by cluster A and the perasperpyranone precursor produced by cluster B, to yield azasperpyranone A. Further modifications of azasperpyranone A result in the production of derivatives, including azasperpyranone B to F. The protein is Non-reducing polyketide synthase ATEG_07661 of Aspergillus terreus (strain NIH 2624 / FGSC A1156).